Consider the following 421-residue polypeptide: Imidazolonepropionase (421 aa).

2 residues coordinate Fe(3+): His81 and His83. Residues His81 and His83 each coordinate Zn(2+). 3 residues coordinate 4-imidazolone-5-propanoate: Arg90, Tyr153, and His186. Tyr153 contacts N-formimidoyl-L-glutamate. His251 is a Fe(3+) binding site. Position 251 (His251) interacts with Zn(2+). Glu254 provides a ligand contact to 4-imidazolone-5-propanoate. Residue Asp326 coordinates Fe(3+). Asp326 contacts Zn(2+). Positions 328 and 330 each coordinate N-formimidoyl-L-glutamate. Ser331 is a binding site for 4-imidazolone-5-propanoate.

It belongs to the metallo-dependent hydrolases superfamily. HutI family. Zn(2+) is required as a cofactor. It depends on Fe(3+) as a cofactor.

It localises to the cytoplasm. The enzyme catalyses 4-imidazolone-5-propanoate + H2O = N-formimidoyl-L-glutamate. It participates in amino-acid degradation; L-histidine degradation into L-glutamate; N-formimidoyl-L-glutamate from L-histidine: step 3/3. In terms of biological role, catalyzes the hydrolytic cleavage of the carbon-nitrogen bond in imidazolone-5-propanoate to yield N-formimidoyl-L-glutamate. It is the third step in the universal histidine degradation pathway. The polypeptide is Imidazolonepropionase (Streptococcus pyogenes serotype M4 (strain MGAS10750)).